The following is a 329-amino-acid chain: Ankyrin repeat and SOCS box protein 5 (329 aa).

6 ANK repeats span residues 69-98, 102-131, 135-164, 167-196, 200-229, and 232-261; these read ADRSPLHEAASQGRLLALRTLLSQGYNVNA, DHITPLHEACLGDHVACARTLLEAGANVNA, DGVTPLFNACSQGSTSCTELLLEYGAKAQL, CLPSPTHEAASKGHHEFLDLLISWGIDVDQ, HLGTPLYVACMSQQFHCIWKLLYAGADVQK, and YWDTPLHAAAQQSSTEIVNLLIEFGADINA. One can recognise an SOCS box domain in the interval 278 to 329; the sequence is MVERILLQHEATPSSLCQLCRLCIRNYIGRPRLHLIPQLQLPTLLQNFLQYR.

This sequence belongs to the ankyrin SOCS box (ASB) family. In terms of tissue distribution, expressed in endothelial and smooth muscle cells of collateral arteries as well as in satellite cells.

It participates in protein modification; protein ubiquitination. Its function is as follows. May be a substrate-recognition component of a SCF-like ECS (Elongin-Cullin-SOCS-box protein) E3 ubiquitin-protein ligase complex which mediates the ubiquitination and subsequent proteasomal degradation of target proteins. May play a role in the initiation of arteriogenesis. In Oryctolagus cuniculus (Rabbit), this protein is Ankyrin repeat and SOCS box protein 5 (ASB5).